The following is a 332-amino-acid chain: Ribonucleoside-diphosphate reductase small chain C (332 aa).

Residues D76, E107, and H110 each contribute to the Fe cation site. The active site involves Y114. The Fe cation site is built by E169, E203, and H206.

This sequence belongs to the ribonucleoside diphosphate reductase small chain family. Homodimer and heterodimer with RNR2A. Heterotetramer of two R1 and two R2 chains. Interacts with CSN7 (via C-terminal tail). Fe cation serves as cofactor. As to expression, expressed in roots, cauline and rosette leaves, stems and flowers.

The protein resides in the cytoplasm. The protein localises to the nucleus. The enzyme catalyses a 2'-deoxyribonucleoside 5'-diphosphate + [thioredoxin]-disulfide + H2O = a ribonucleoside 5'-diphosphate + [thioredoxin]-dithiol. In terms of biological role, provides the precursors necessary for DNA synthesis. Catalyzes the biosynthesis of deoxyribonucleotides from the corresponding ribonucleotides. Involved in DNA damage repair and programmed cell death inhibition. In Arabidopsis thaliana (Mouse-ear cress), this protein is Ribonucleoside-diphosphate reductase small chain C (TSO2).